The chain runs to 510 residues: NAD(P)H-quinone oxidoreductase subunit 2 A, chloroplastic (510 aa).

13 consecutive transmembrane segments (helical) span residues 24–44 (LLLF…GLIL), 57–77 (IPWL…ALLF), 99–119 (IFQF…VEYI), 124–144 (MAIT…MFLC), 149–169 (LITI…LSGY), 183–203 (YLLM…WLYG), 227–247 (PGIS…LSPA), 295–315 (WHLL…LIAI), 323–343 (MLAY…IVGD), 354–374 (YMLF…SFGL), 395–415 (ALSL…AGFF), 418–438 (LHLF…IGLL), and 484–504 (MIVC…IIAI).

Belongs to the complex I subunit 2 family. NDH is composed of at least 16 different subunits, 5 of which are encoded in the nucleus.

It localises to the plastid. The protein localises to the chloroplast thylakoid membrane. The enzyme catalyses a plastoquinone + NADH + (n+1) H(+)(in) = a plastoquinol + NAD(+) + n H(+)(out). The catalysed reaction is a plastoquinone + NADPH + (n+1) H(+)(in) = a plastoquinol + NADP(+) + n H(+)(out). Functionally, NDH shuttles electrons from NAD(P)H:plastoquinone, via FMN and iron-sulfur (Fe-S) centers, to quinones in the photosynthetic chain and possibly in a chloroplast respiratory chain. The immediate electron acceptor for the enzyme in this species is believed to be plastoquinone. Couples the redox reaction to proton translocation, and thus conserves the redox energy in a proton gradient. The protein is NAD(P)H-quinone oxidoreductase subunit 2 A, chloroplastic of Vitis vinifera (Grape).